The primary structure comprises 132 residues: MSMTDPIADLLTRIRNANLAHHEVVEIPASKIKKSIAEILKSEGFIRDVEYIEDNKQGVIRVFLKYGEDRNRVITGIKRISKPGLRKYAKADSLPKVLNGLGIAIISTSAGVITDKEARSKQVGGEVIAYVW.

The protein belongs to the universal ribosomal protein uS8 family. In terms of assembly, part of the 30S ribosomal subunit. Contacts proteins S5 and S12.

In terms of biological role, one of the primary rRNA binding proteins, it binds directly to 16S rRNA central domain where it helps coordinate assembly of the platform of the 30S subunit. The sequence is that of Small ribosomal subunit protein uS8 from Leuconostoc citreum (strain KM20).